The following is a 142-amino-acid chain: MRTIFVNEREAVRAWHLIDAAGRPLGRVAARVACLLRGKHKASYTPNQEMGDYVVVINAEKVFLSGTKPKDKMYYRHSGYPGGLKSVSFSALVKRRPVEPLRHAVKGMLPKGPLGRKLIKNVKIYAGSVHPHESQNPVPLSC.

It belongs to the universal ribosomal protein uL13 family. As to quaternary structure, part of the 50S ribosomal subunit.

Functionally, this protein is one of the early assembly proteins of the 50S ribosomal subunit, although it is not seen to bind rRNA by itself. It is important during the early stages of 50S assembly. This is Large ribosomal subunit protein uL13 from Treponema pallidum (strain Nichols).